Reading from the N-terminus, the 211-residue chain is Uracil phosphoribosyltransferase (211 aa).

5-phospho-alpha-D-ribose 1-diphosphate is bound by residues Arg79, Arg104, and Asp131–Ser139. Uracil contacts are provided by residues Ile196 and Gly201–Ala203. Asp202 is a binding site for 5-phospho-alpha-D-ribose 1-diphosphate.

Belongs to the UPRTase family. Mg(2+) serves as cofactor.

It catalyses the reaction UMP + diphosphate = 5-phospho-alpha-D-ribose 1-diphosphate + uracil. Its pathway is pyrimidine metabolism; UMP biosynthesis via salvage pathway; UMP from uracil: step 1/1. Its activity is regulated as follows. Allosterically activated by GTP. Functionally, catalyzes the conversion of uracil and 5-phospho-alpha-D-ribose 1-diphosphate (PRPP) to UMP and diphosphate. The chain is Uracil phosphoribosyltransferase from Lactococcus lactis subsp. cremoris (strain SK11).